Reading from the N-terminus, the 486-residue chain is Malonate-semialdehyde dehydrogenase (486 aa).

NAD(+)-binding residues include Phe-154, Lys-178, Glu-181, Arg-182, and Ser-231. Cys-286 acts as the Nucleophile in catalysis. Residue Glu-386 participates in NAD(+) binding.

It belongs to the aldehyde dehydrogenase family. IolA subfamily. Homotetramer.

The catalysed reaction is 3-oxopropanoate + NAD(+) + CoA + H2O = hydrogencarbonate + acetyl-CoA + NADH + H(+). It carries out the reaction 2-methyl-3-oxopropanoate + NAD(+) + CoA + H2O = propanoyl-CoA + hydrogencarbonate + NADH + H(+). Its pathway is polyol metabolism; myo-inositol degradation into acetyl-CoA; acetyl-CoA from myo-inositol: step 7/7. Its function is as follows. Catalyzes the oxidation of malonate semialdehyde (MSA) and methylmalonate semialdehyde (MMSA) into acetyl-CoA and propanoyl-CoA, respectively. Is involved in a myo-inositol catabolic pathway. Bicarbonate, and not CO2, is the end-product of the enzymatic reaction. This is Malonate-semialdehyde dehydrogenase from Bacillus cereus (strain B4264).